A 217-amino-acid polypeptide reads, in one-letter code: 7-cyano-7-deazaguanine synthase (217 aa).

10–20 (FSGGQDSTTCL) contacts ATP. The Zn(2+) site is built by Cys-185, Cys-194, Cys-197, and Cys-200.

It belongs to the QueC family. In terms of assembly, homodimer. Zn(2+) is required as a cofactor.

It catalyses the reaction 7-carboxy-7-deazaguanine + NH4(+) + ATP = 7-cyano-7-deazaguanine + ADP + phosphate + H2O + H(+). Its pathway is purine metabolism; 7-cyano-7-deazaguanine biosynthesis. Functionally, catalyzes the ATP-dependent conversion of 7-carboxy-7-deazaguanine (CDG) to 7-cyano-7-deazaguanine (preQ(0)). This chain is 7-cyano-7-deazaguanine synthase, found in Streptococcus thermophilus (strain CNRZ 1066).